The following is a 418-amino-acid chain: UDP-N-acetylglucosamine 1-carboxyvinyltransferase (418 aa).

Phosphoenolpyruvate is bound at residue 22–23 (KN). Arginine 92 contributes to the UDP-N-acetyl-alpha-D-glucosamine binding site. Cysteine 116 acts as the Proton donor in catalysis. A 2-(S-cysteinyl)pyruvic acid O-phosphothioketal modification is found at cysteine 116. Positions 305 and 327 each coordinate UDP-N-acetyl-alpha-D-glucosamine.

It belongs to the EPSP synthase family. MurA subfamily.

The protein resides in the cytoplasm. The enzyme catalyses phosphoenolpyruvate + UDP-N-acetyl-alpha-D-glucosamine = UDP-N-acetyl-3-O-(1-carboxyvinyl)-alpha-D-glucosamine + phosphate. It participates in cell wall biogenesis; peptidoglycan biosynthesis. Its function is as follows. Cell wall formation. Adds enolpyruvyl to UDP-N-acetylglucosamine. The sequence is that of UDP-N-acetylglucosamine 1-carboxyvinyltransferase from Gluconobacter oxydans (strain 621H) (Gluconobacter suboxydans).